The sequence spans 96 residues: Protein C4 (96 aa).

Residue Gly-2 is the site of N-myristoyl glycine; by host attachment. A disordered region spans residues 66–96 (STDDLQGEDSRQPMTLTPRQLTQDVSRRLLM). A compositionally biased stretch (polar residues) spans 77 to 89 (QPMTLTPRQLTQD).

Belongs to the geminiviridae protein AC4/C4 family.

Its subcellular location is the host cell membrane. In terms of biological role, pathogenicity determinant. May act as a suppressor of RNA-mediated gene silencing, also known as post-transcriptional gene silencing (PTGS), a mechanism of plant viral defense that limits the accumulation of viral RNAs. In Solanum lycopersicum (Tomato), this protein is Protein C4.